The primary structure comprises 136 residues: Large ribosomal subunit protein eL27 (136 aa).

The KOW domain maps to 5–36; sequence MKPGKVVLVLRGKYAGRKAVVVKQQDEGVSDR.

It belongs to the eukaryotic ribosomal protein eL27 family. In terms of assembly, component of the large ribosomal subunit.

It is found in the cytoplasm. The protein localises to the cytosol. It localises to the rough endoplasmic reticulum. Functionally, component of the large ribosomal subunit. This is Large ribosomal subunit protein eL27 (rpl-27) from Caenorhabditis elegans.